The chain runs to 203 residues: Putative 3-methyladenine DNA glycosylase (203 aa).

Belongs to the DNA glycosylase MPG family.

The polypeptide is Putative 3-methyladenine DNA glycosylase (Clostridium botulinum (strain Langeland / NCTC 10281 / Type F)).